A 400-amino-acid polypeptide reads, in one-letter code: MIIKPKIRGFICTTTHPVGCEANVQEQIALTKAKGKIANGPKKVLVVGSSSGYGLSSRIAAAFGSDAATIGVFFEKPGTEAKPGTAGWYNSAAFDKFAKAEGLYSKSINCDAFSHEAKQKVIELIKQDLGQVDMVVYSLASPVRKLPDSGELVRSALKPIGETYTATAVDTNKDCIIEATVEPATEQEIADTVTVMGGQDWELWINALAEAGVLSDNCKTVAYSYIGTELTWPIYWHGALGKAKMDLDRAAKALNDKLSVTGGSANVAVLKSVVTQASSAIPVMPLYIAMVFKKMRQEGLHEGCMEQIYRMFSERLFRADGAKPETDSDNRLRLDDWELREDIQQHCRDLWPQVTTENLSELTDYQEYKAEFIKLFGFGIEGINYDADVNPYVEFDVIEL.

Residues 48-53 (GSSSGY), 74-75 (FE), 111-112 (DA), and 139-140 (LA) each bind NAD(+). A substrate-binding site is contributed by Tyr-225. Residue Tyr-235 is the Proton donor of the active site. NAD(+) contacts are provided by residues Lys-244 and 273 to 275 (VVT).

The protein belongs to the TER reductase family. In terms of assembly, monomer.

The enzyme catalyses a 2,3-saturated acyl-[ACP] + NAD(+) = a (2E)-enoyl-[ACP] + NADH + H(+). The protein operates within lipid metabolism; fatty acid biosynthesis. Functionally, involved in the final reduction of the elongation cycle of fatty acid synthesis (FAS II). Catalyzes the reduction of a carbon-carbon double bond in an enoyl moiety that is covalently linked to an acyl carrier protein (ACP). The protein is Enoyl-[acyl-carrier-protein] reductase [NADH] of Shewanella oneidensis (strain ATCC 700550 / JCM 31522 / CIP 106686 / LMG 19005 / NCIMB 14063 / MR-1).